Reading from the N-terminus, the 297-residue chain is Superoxide dismutase 1 copper chaperone (297 aa).

A Cu cation-binding site is contributed by cysteine 11. The interval 222–263 (GSSCCSKKDSSPSEKPSCCSQEKKSCCSSKKPSCCSQEKKGC) is disordered. Low complexity predominate over residues 234–257 (SEKPSCCSQEKKSCCSSKKPSCCS).

This sequence belongs to the CCS1 family.

It localises to the cytoplasm. Copper chaperone for superoxide dismutase 1 (sod1). Binds copper ions and delivers them specifically to sod1. Also has a role in cell protection against copper ion toxicity during conditions of copper excess. The C-terminal region is thought to act specifically in this sequestration role. In Schizosaccharomyces pombe (strain 972 / ATCC 24843) (Fission yeast), this protein is Superoxide dismutase 1 copper chaperone (ccs1).